Here is a 430-residue protein sequence, read N- to C-terminus: UDP-N-acetylglucosamine 1-carboxyvinyltransferase (430 aa).

22-23 contributes to the phosphoenolpyruvate binding site; sequence KN. R102 is a UDP-N-acetyl-alpha-D-glucosamine binding site. C126 serves as the catalytic Proton donor. Position 126 is a 2-(S-cysteinyl)pyruvic acid O-phosphothioketal (C126). UDP-N-acetyl-alpha-D-glucosamine contacts are provided by residues 131–135, 172–175, D317, and I339; these read RPVDL and KVSV.

This sequence belongs to the EPSP synthase family. MurA subfamily.

The protein localises to the cytoplasm. The catalysed reaction is phosphoenolpyruvate + UDP-N-acetyl-alpha-D-glucosamine = UDP-N-acetyl-3-O-(1-carboxyvinyl)-alpha-D-glucosamine + phosphate. It functions in the pathway cell wall biogenesis; peptidoglycan biosynthesis. In terms of biological role, cell wall formation. Adds enolpyruvyl to UDP-N-acetylglucosamine. The chain is UDP-N-acetylglucosamine 1-carboxyvinyltransferase from Rhizobium etli (strain CIAT 652).